The sequence spans 253 residues: 3-deoxy-manno-octulosonate cytidylyltransferase (253 aa).

The protein belongs to the KdsB family.

The protein localises to the cytoplasm. It carries out the reaction 3-deoxy-alpha-D-manno-oct-2-ulosonate + CTP = CMP-3-deoxy-beta-D-manno-octulosonate + diphosphate. Its pathway is nucleotide-sugar biosynthesis; CMP-3-deoxy-D-manno-octulosonate biosynthesis; CMP-3-deoxy-D-manno-octulosonate from 3-deoxy-D-manno-octulosonate and CTP: step 1/1. The protein operates within bacterial outer membrane biogenesis; lipopolysaccharide biosynthesis. In terms of biological role, activates KDO (a required 8-carbon sugar) for incorporation into bacterial lipopolysaccharide in Gram-negative bacteria. The chain is 3-deoxy-manno-octulosonate cytidylyltransferase from Neisseria gonorrhoeae (strain ATCC 700825 / FA 1090).